Here is a 418-residue protein sequence, read N- to C-terminus: Trans-acting enoyl reductase (418 aa).

This sequence belongs to the saccharopine dehydrogenase family. Enoyl reductase subfamily.

Its function is as follows. Involved in the reduction of the double bond between C-4 and C-5 during phthiocerol dimycocerosates (DIM A) and glycosylated phenolphthiocerol dimycocerosates (PGL) biosynthesis. This Mycobacterium leprae (strain TN) protein is Trans-acting enoyl reductase.